Consider the following 345-residue polypeptide: Methionine import ATP-binding protein MetN 2 (345 aa).

The region spanning 4 to 243 (IELRHVKKEF…PQTEIAKRFI (240 aa)) is the ABC transporter domain. 40–47 (GYSGAGKS) is an ATP binding site.

The protein belongs to the ABC transporter superfamily. Methionine importer (TC 3.A.1.24) family. In terms of assembly, the complex is composed of two ATP-binding proteins (MetN), two transmembrane proteins (MetI) and a solute-binding protein (MetQ).

The protein resides in the cell membrane. The enzyme catalyses L-methionine(out) + ATP + H2O = L-methionine(in) + ADP + phosphate + H(+). It catalyses the reaction D-methionine(out) + ATP + H2O = D-methionine(in) + ADP + phosphate + H(+). Its function is as follows. Part of the ABC transporter complex MetNIQ involved in methionine import. Responsible for energy coupling to the transport system. This Enterococcus faecalis (strain ATCC 700802 / V583) protein is Methionine import ATP-binding protein MetN 2.